The following is a 229-amino-acid chain: 2-C-methyl-D-erythritol 4-phosphate cytidylyltransferase (229 aa).

It belongs to the IspD/TarI cytidylyltransferase family. IspD subfamily.

It catalyses the reaction 2-C-methyl-D-erythritol 4-phosphate + CTP + H(+) = 4-CDP-2-C-methyl-D-erythritol + diphosphate. Its pathway is isoprenoid biosynthesis; isopentenyl diphosphate biosynthesis via DXP pathway; isopentenyl diphosphate from 1-deoxy-D-xylulose 5-phosphate: step 2/6. In terms of biological role, catalyzes the formation of 4-diphosphocytidyl-2-C-methyl-D-erythritol from CTP and 2-C-methyl-D-erythritol 4-phosphate (MEP). The sequence is that of 2-C-methyl-D-erythritol 4-phosphate cytidylyltransferase from Neisseria meningitidis serogroup A / serotype 4A (strain DSM 15465 / Z2491).